The sequence spans 359 residues: Tropomodulin-1 (359 aa).

A disordered region spans residues 36–61 (ELDPDNALLPAGLRQKDQTTKAPTGP). The tract at residues 39-138 (PDNALLPAGL…CDIAAILGMH (100 aa)) is tropomyosin-binding.

It belongs to the tropomodulin family. Binds to the N-terminus of tropomyosin and to actin. Interacts with FLII. Highly expressed in the erythrocyte, heart and skeletal muscle.

The protein localises to the cytoplasm. The protein resides in the cytoskeleton. Its function is as follows. Blocks the elongation and depolymerization of the actin filaments at the pointed end. The Tmod/TM complex contributes to the formation of the short actin protofilament, which in turn defines the geometry of the membrane skeleton. May play an important role in regulating the organization of actin filaments by preferentially binding to a specific tropomyosin isoform at its N-terminus. The polypeptide is Tropomodulin-1 (TMOD1) (Homo sapiens (Human)).